The chain runs to 536 residues: Caspase recruitment domain-containing protein 9 (536 aa).

Position 2 is a phosphoserine (serine 2). Zn(2+) contacts are provided by aspartate 3, cysteine 10, and histidine 73. The region spanning 6–98 (NDDECWSALE…QLYRKVTGKE (93 aa)) is the CARD domain. Residues 99–116 (PARVFSMIIDASGESGLT) are linker. Coiled-coil stretches lie at residues 117-277 (QLLM…HRNS) and 303-420 (SLRK…QLDM). Residue lysine 125 forms a Glycyl lysine isopeptide (Lys-Gly) (interchain with G-Cter in ubiquitin) linkage. Residue threonine 231 is modified to Phosphothreonine. The residue at position 277 (serine 277) is a Phosphoserine. Phosphoserine occurs at positions 424, 425, 431, 451, 461, 483, and 498. The disordered stretch occupies residues 425–451 (SDLEDSSPRNSQELSLPQDLEEDAQLS). The tract at residues 472 to 536 (KHLSQTHDTV…GSDNTDTEGS (65 aa)) is disordered. Positions 487–502 (PPEKERRRLKESFENY) are enriched in basic and acidic residues. A phosphothreonine; by CK2 mark is found at threonine 531 and threonine 533.

Monomer. Homodimer; homodimerization is mediated by the CARD domain which forms an extensive interaction with the adjacent linker and coiled-coil regions; leads to an autoinhibited state. Homomultimer; polymerizes following activation, forming a nucleating helical template that seeds BCL10-filament formation via a CARD-CARD interaction. Interacts (via CARD domain) with BCL10 (via CARD domain); interaction takes place following CARD9 activation and polymerization, leading to the formation of a filamentous CBM complex assembly. Component of a CBM complex (CARD9-BCL10, MALT1), composed of CARD9, BCL10 and MALT1. Interacts with RASGRF1. Interacts with NOD2 (via NACHT domain); interaction is direct. Interacts with RIPK2. Interacts with VHL; without leading to protein degradation. Post-translationally, phosphorylated at Thr-231 by PRKCD downstream of C-type lectin receptors activation: phosphorylation promotes interaction with BCL10, followed by activation of NF-kappa-B and MAP kinase p38 pathways. Phosphorylated at Thr-531 and Thr-533 by CK2 following interaction with VHL, leading to inhibit the ability to activate NF-kappa-B. In terms of processing, ubiquitinated at Lys-125 via 'Lys-27'-linked ubiquitin by TRIM62 downstream of C-type lectin receptors activation; leading to CARD9 activation, followed by activation of NF-kappa-B and MAP kinase p38 pathways. Deubiquitinated at Lys-125 by USP15, inhibiting CARD9.

Its subcellular location is the cytoplasm. With respect to regulation, maintained in an autoinhibited state via homodimerization in which the CARD domain forms an extensive interaction with the adjacent linker and coiled-coil regions. Activation downstream of C-type lectin receptors, by phosphorylation by PRKCD and/or ubiquitination by TRIM62, triggers disruption of the CARD domain-coiled coil interface, CARD9 homooligomerization and BCL10 recruitment, followed by activation of NF-kappa-B and MAP kinase p38 pathways. Zinc-binding inhibits activation by stabilizing the CARD ground-state conformation and restricting its capacity to form BCL10-nucleating filaments. Its function is as follows. Adapter protein that plays a key role in innate immune response against fungi by forming signaling complexes downstream of C-type lectin receptors. CARD9-mediated signals are essential for antifungal immunity against a subset of fungi from the phylum Ascomycota. Transduces signals in myeloid cells downstream of C-type lectin receptors CLEC7A (dectin-1), CLEC6A (dectin-2) and CLEC4E (Mincle), which detect pathogen-associated molecular pattern metabolites (PAMPs), such as fungal carbohydrates, and trigger CARD9 activation. Upon activation, CARD9 homooligomerizes to form a nucleating helical template that recruits BCL10 via CARD-CARD interaction, thereby promoting polymerization of BCL10 and subsequent recruitment of MALT1: this leads to activation of NF-kappa-B and MAP kinase p38 (MAPK11, MAPK12, MAPK13 and/or MAPK14) pathways which stimulate expression of genes encoding pro-inflammatory cytokines and chemokines. CARD9 signaling in antigen-presenting cells links innate sensing of fungi to the activation of adaptive immunity and provides a cytokine milieu that induces the development and subsequent of interleukin 17-producing T helper (Th17) cells. Also involved in activation of myeloid cells via classical ITAM-associated receptors and TLR: required for TLR-mediated activation of MAPK, while it is not required for TLR-induced activation of NF-kappa-B. CARD9 can also be engaged independently of BCL10: forms a complex with RASGRF1 downstream of C-type lectin receptors, which recruits and activates HRAS, leading to ERK activation and the production of cytokines. Acts as an important regulator of the intestinal commensal fungi (mycobiota) component of the gut microbiota. Plays an essential role in antifungal immunity against dissemination of gut fungi: acts by promoting induction of antifungal IgG antibodies response in CX3CR1(+) macrophages to confer protection against disseminated C.albicans or C.auris infection. Also mediates immunity against other pathogens, such as certain bacteria, viruses and parasites; CARD9 signaling is however redundant with other innate immune responses. In response to L.monocytogenes infection, required for the production of inflammatory cytokines activated by intracellular peptidoglycan: acts by connecting NOD2 recognition of peptidoglycan to downstream activation of MAP kinases (MAPK) without activating NF-kappa-B. This is Caspase recruitment domain-containing protein 9 from Rattus norvegicus (Rat).